A 196-amino-acid polypeptide reads, in one-letter code: Phosphoheptose isomerase (196 aa).

An SIS domain is found at Val-36–Asp-195. A substrate-binding site is contributed by Asn-51–Gly-53. Zn(2+) contacts are provided by His-60 and Glu-64. Residues Glu-64, Asn-93–Asp-94, Ser-119–Ser-121, Ser-124, and Gln-171 each bind substrate. Zn(2+)-binding residues include Gln-171 and His-179.

The protein belongs to the SIS family. GmhA subfamily. It depends on Zn(2+) as a cofactor.

Its subcellular location is the cytoplasm. The enzyme catalyses 2 D-sedoheptulose 7-phosphate = D-glycero-alpha-D-manno-heptose 7-phosphate + D-glycero-beta-D-manno-heptose 7-phosphate. Its pathway is carbohydrate biosynthesis; D-glycero-D-manno-heptose 7-phosphate biosynthesis; D-glycero-alpha-D-manno-heptose 7-phosphate and D-glycero-beta-D-manno-heptose 7-phosphate from sedoheptulose 7-phosphate: step 1/1. Its function is as follows. Catalyzes the isomerization of sedoheptulose 7-phosphate in D-glycero-D-manno-heptose 7-phosphate. The chain is Phosphoheptose isomerase from Clostridium acetobutylicum (strain ATCC 824 / DSM 792 / JCM 1419 / IAM 19013 / LMG 5710 / NBRC 13948 / NRRL B-527 / VKM B-1787 / 2291 / W).